The chain runs to 155 residues: MATKSTSKPLLLSFLMMSYLISTFHVITVAEGRTLQFTKMATDHSGAGNLMDCWNAGLELKSCTDEIVKFFLSQTGTSEPPVKGGIDKDCCGAIGLVVKDCWSVMFTSLGLTTMEGNNLREYCEFQAEKSELSPSPAPETLALSPVEITYPGLDY.

An N-terminal signal peptide occupies residues 1–32; that stretch reads MATKSTSKPLLLSFLMMSYLISTFHVITVAEG.

It belongs to the plant egg cell-secreted peptide family. Restricted to female reproductive tissues, specifically accumulating in storage vesicles of the unfertilized egg cell.

Its subcellular location is the cytoplasmic vesicle. The protein localises to the secreted. Involved in the regulation of gamete interactions during the double fertilization and to prevent multiple-pollen tube attraction; mediates the redistribution of the gamete fusogen HAP2/GCS1 to the cell surface after secretion upon sperm arrival. This is Egg cell-secreted protein 1.5 (EC1.5) from Arabidopsis thaliana (Mouse-ear cress).